The following is a 635-amino-acid chain: Phosphatidylserine decarboxylase proenzyme 2 (635 aa).

The region spanning 20–146 (KLQKFRIHRR…VVQEPESTCK (127 aa)) is the C2 domain. EF-hand domains are found at residues 174–209 (TERR…FGNL) and 210–245 (VAAN…QQEQ). Ca(2+)-binding residues include aspartate 187, asparagine 189, aspartate 191, glutamine 193, glutamate 198, aspartate 223, asparagine 225, aspartate 227, and glutamate 234. Residues aspartate 443, histidine 499, and serine 587 each act as charge relay system; for autoendoproteolytic cleavage activity in the active site. Serine 587 serves as the catalytic Schiff-base intermediate with substrate; via pyruvic acid; for decarboxylase activity. Residue serine 587 is modified to Pyruvic acid (Ser); by autocatalysis.

Belongs to the phosphatidylserine decarboxylase family. PSD-B subfamily. Eukaryotic type II sub-subfamily. Heterodimer of a large membrane-associated beta subunit and a small pyruvoyl-containing alpha subunit. It depends on pyruvate as a cofactor. Is synthesized initially as an inactive proenzyme. Formation of the active enzyme involves a self-maturation process in which the active site pyruvoyl group is generated from an internal serine residue via an autocatalytic post-translational modification. Two non-identical subunits are generated from the proenzyme in this reaction, and the pyruvate is formed at the N-terminus of the alpha chain, which is derived from the carboxyl end of the proenzyme. The autoendoproteolytic cleavage occurs by a canonical serine protease mechanism, in which the side chain hydroxyl group of the serine supplies its oxygen atom to form the C-terminus of the beta chain, while the remainder of the serine residue undergoes an oxidative deamination to produce ammonia and the pyruvoyl prosthetic group on the alpha chain. During this reaction, the Ser that is part of the protease active site of the proenzyme becomes the pyruvoyl prosthetic group, which constitutes an essential element of the active site of the mature decarboxylase. In terms of tissue distribution, highly expressed in flowers and at lower levels in leaves.

The protein localises to the vacuole membrane. The enzyme catalyses a 1,2-diacyl-sn-glycero-3-phospho-L-serine + H(+) = a 1,2-diacyl-sn-glycero-3-phosphoethanolamine + CO2. It participates in phospholipid metabolism; phosphatidylethanolamine biosynthesis; phosphatidylethanolamine from CDP-diacylglycerol: step 2/2. In terms of biological role, catalyzes the formation of phosphatidylethanolamine (PtdEtn) from phosphatidylserine (PtdSer). Plays a central role in phospholipid metabolism and in the interorganelle trafficking of phosphatidylserine. Contributes only to a minor proportion of PtdEtn production. The polypeptide is Phosphatidylserine decarboxylase proenzyme 2 (PSD2) (Arabidopsis thaliana (Mouse-ear cress)).